Consider the following 316-residue polypeptide: Neuroguidin-B (316 aa).

2 disordered regions span residues 124-169 (ENDP…SKVK) and 292-316 (VPFM…RRRH). The span at 145–156 (DERESDSGEEGA) shows a compositional bias: acidic residues. Basic residues predominate over residues 296-316 (KKSKKGPKKSKKKKGFSRRRH).

Belongs to the SAS10 family. As to quaternary structure, part of the small subunit (SSU) processome, composed of more than 70 proteins and the RNA chaperone small nucleolar RNA (snoRNA) U3.

The protein resides in the nucleus. It is found in the nucleolus. It localises to the chromosome. The protein localises to the centromere. Its subcellular location is the cytoplasm. The protein resides in the cell projection. It is found in the axon. It localises to the dendrite. The protein localises to the filopodium. Its function is as follows. Part of the small subunit (SSU) processome, first precursor of the small eukaryotic ribosomal subunit. During the assembly of the SSU processome in the nucleolus, many ribosome biogenesis factors, an RNA chaperone and ribosomal proteins associate with the nascent pre-rRNA and work in concert to generate RNA folding, modifications, rearrangements and cleavage as well as targeted degradation of pre-ribosomal RNA by the RNA exosome. Its dissociation from the complex determines the transition from state pre-A1 to state pre-A1*. May inhibit mRNA translation. The protein is Neuroguidin-B (ngdn-b) of Xenopus laevis (African clawed frog).